A 184-amino-acid chain; its full sequence is ATP synthase subunit b (184 aa).

The helical transmembrane segment at 15 to 34 threads the bilayer; sequence VQPGLIFWTLVTFVIAAVVL.

This sequence belongs to the ATPase B chain family. As to quaternary structure, F-type ATPases have 2 components, F(1) - the catalytic core - and F(0) - the membrane proton channel. F(1) has five subunits: alpha(3), beta(3), gamma(1), delta(1), epsilon(1). F(0) has three main subunits: a(1), b(2) and c(10-14). The alpha and beta chains form an alternating ring which encloses part of the gamma chain. F(1) is attached to F(0) by a central stalk formed by the gamma and epsilon chains, while a peripheral stalk is formed by the delta and b chains.

It is found in the cell inner membrane. In terms of biological role, f(1)F(0) ATP synthase produces ATP from ADP in the presence of a proton or sodium gradient. F-type ATPases consist of two structural domains, F(1) containing the extramembraneous catalytic core and F(0) containing the membrane proton channel, linked together by a central stalk and a peripheral stalk. During catalysis, ATP synthesis in the catalytic domain of F(1) is coupled via a rotary mechanism of the central stalk subunits to proton translocation. Its function is as follows. Component of the F(0) channel, it forms part of the peripheral stalk, linking F(1) to F(0). The polypeptide is ATP synthase subunit b (Myxococcus xanthus (strain DK1622)).